The sequence spans 276 residues: Putative pyruvate, phosphate dikinase regulatory protein (276 aa).

151–158 (GISRTSKT) serves as a coordination point for ADP.

Belongs to the pyruvate, phosphate/water dikinase regulatory protein family. PDRP subfamily.

It catalyses the reaction N(tele)-phospho-L-histidyl/L-threonyl-[pyruvate, phosphate dikinase] + ADP = N(tele)-phospho-L-histidyl/O-phospho-L-threonyl-[pyruvate, phosphate dikinase] + AMP + H(+). The enzyme catalyses N(tele)-phospho-L-histidyl/O-phospho-L-threonyl-[pyruvate, phosphate dikinase] + phosphate + H(+) = N(tele)-phospho-L-histidyl/L-threonyl-[pyruvate, phosphate dikinase] + diphosphate. Bifunctional serine/threonine kinase and phosphorylase involved in the regulation of the pyruvate, phosphate dikinase (PPDK) by catalyzing its phosphorylation/dephosphorylation. The polypeptide is Putative pyruvate, phosphate dikinase regulatory protein (Streptococcus agalactiae serotype Ia (strain ATCC 27591 / A909 / CDC SS700)).